Reading from the N-terminus, the 585-residue chain is Arginine--tRNA ligase (585 aa).

A 'HIGH' region motif is present at residues 126-136; sequence PNIAKEMHVGH.

The protein belongs to the class-I aminoacyl-tRNA synthetase family. Monomer.

The protein localises to the cytoplasm. The catalysed reaction is tRNA(Arg) + L-arginine + ATP = L-arginyl-tRNA(Arg) + AMP + diphosphate. In Cyanothece sp. (strain PCC 7425 / ATCC 29141), this protein is Arginine--tRNA ligase.